The chain runs to 2070 residues: Multiple PDZ domain protein (2070 aa).

Residues M1 to N63 form the L27 domain. The 88-residue stretch at V137–S224 folds into the PDZ 1 domain. Phosphoserine is present on S230. PDZ domains are found at residues T257–A337 and D377–G463. At S483 the chain carries Phosphoserine. PDZ domains lie at V553 to T634 and H700 to P786. 2 positions are modified to phosphoserine: S790 and S1078. Residues T1008–V1089 enclose the PDZ 6 domain. The interval D1121–N1140 is disordered. A PDZ 7 domain is found at R1151–I1243. R1170 carries the post-translational modification Omega-N-methylarginine. Positions A1278–V1324 are disordered. Residues D1311–S1321 show a composition bias toward polar residues. PDZ domains are found at residues M1350 to K1433 and H1483 to N1564. The disordered stretch occupies residues S1567–I1612. Over residues S1584–P1610 the composition is skewed to polar residues. PDZ domains are found at residues T1629–E1712 and T1725–K1807. 2 positions are modified to phosphoserine: S1818 and S1824. 2 consecutive PDZ domains span residues T1862–G1948 and S1987–S2070.

As to quaternary structure, interacts with CLDN5, DLG4, GRIN1, F11R/JAM, CLDN1, NG2, CRB1, MPP4 and PALS1. Interacts with HTR2A, HTR2B, HTR2C, PLEKHA1/TAPP1, PLEKHA2/TAPP2, CXADR, SYNGAP1, CAMK2A and CAMK2B. Interacts with FAT4 (via cytoplasmic domain). Interacts with DLL1. In terms of assembly, (Microbial infection) Interacts with human adenovirus type 9 E4-ORF1 protein. (Microbial infection) Interacts with human papillomavirus 18/HPV18 protein E6. In terms of tissue distribution, expressed in heart, brain, placenta, liver, skeletal muscle, kidney and pancreas.

Its subcellular location is the cell membrane. It is found in the apical cell membrane. The protein localises to the postsynaptic density. It localises to the cell projection. The protein resides in the dendrite. Its subcellular location is the cell junction. It is found in the tight junction. The protein localises to the synapse. It localises to the synaptosome. Its function is as follows. Member of the NMDAR signaling complex that may play a role in control of AMPAR potentiation and synaptic plasticity in excitatory synapses. Promotes clustering of HT2RC at the cell surface. The protein is Multiple PDZ domain protein (MPDZ) of Homo sapiens (Human).